The primary structure comprises 313 residues: GMP synthase [glutamine-hydrolyzing] subunit B (313 aa).

The region spanning 6-190 (KVWEKFIEEK…LGLPEKIYNR (185 aa)) is the GMPS ATP-PPase domain. 33-39 (SGGVDSS) is an ATP binding site.

As to quaternary structure, heterodimer composed of a glutamine amidotransferase subunit (A) and a GMP-binding subunit (B).

It carries out the reaction XMP + L-glutamine + ATP + H2O = GMP + L-glutamate + AMP + diphosphate + 2 H(+). The protein operates within purine metabolism; GMP biosynthesis; GMP from XMP (L-Gln route): step 1/1. In terms of biological role, catalyzes the synthesis of GMP from XMP. The chain is GMP synthase [glutamine-hydrolyzing] subunit B (guaAB) from Pyrococcus furiosus (strain ATCC 43587 / DSM 3638 / JCM 8422 / Vc1).